A 347-amino-acid chain; its full sequence is Protein POOR HOMOLOGOUS SYNAPSIS 1 (347 aa).

The protein localises to the cytoplasm. Required for accurate chromosome segregation in meiosis. Required for pairing to occur between homologous chromosomes. Acts in early recombination steps and ensures pairing fidelity and proper repair of meiotic DNA double-strand-breaks. Regulates recombination and pairing of homologous chromosomes during meiotic prophase by controlling transport of RAD50 from cytoplasm to the nucleus. May affect pairing of the gene-rich fraction of the genome rather than preventing pairing between repetitive DNA elements. The polypeptide is Protein POOR HOMOLOGOUS SYNAPSIS 1 (Zea mays (Maize)).